We begin with the raw amino-acid sequence, 635 residues long: Replication factor C small subunit (635 aa).

Position 51-58 (51-58 (GPPGTGKT)) interacts with ATP.

This sequence belongs to the activator 1 small subunits family. RfcS subfamily. In terms of assembly, heteromultimer composed of small subunits (RfcS) and large subunits (RfcL). Post-translationally, this protein undergoes a protein self splicing that involves a post-translational excision of the intervening region (intein) followed by peptide ligation.

Its function is as follows. Part of the RFC clamp loader complex which loads the PCNA sliding clamp onto DNA. The polypeptide is Replication factor C small subunit (rfcS) (Methanopyrus kandleri (strain AV19 / DSM 6324 / JCM 9639 / NBRC 100938)).